The primary structure comprises 940 residues: Phagocyte signaling-impaired protein (940 aa).

The TPR repeat unit spans residues 77–110 (STTLHVMTLCYKETDQLDKICQIFTSASKQLPGN).

This sequence belongs to the MDM20/NAA25 family. Component of the N-terminal acetyltransferase B (NatB) complex.

It is found in the lysosome. In terms of biological role, non-catalytic subunit of the NatB complex which catalyzes acetylation of the N-terminal methionine residues of proteins beginning with Met-Asp or Met-Glu. Has 2 roles in the larval immune response: required both for the phagocytic degradation of internalized bacteria and for the induction of Defensin in the fat body. Within the phagocytic blood cells, has a role in detection of infection and activation of the humoral immune response. The sequence is that of Phagocyte signaling-impaired protein from Aedes aegypti (Yellowfever mosquito).